We begin with the raw amino-acid sequence, 484 residues long: Poly(A) RNA polymerase GLD2 (484 aa).

Ser-62 and Ser-69 each carry phosphoserine. Residues 76 to 92 (KRLSDEKNLPLDGKRQR) carry the Nuclear localization signal motif. A Phosphoserine modification is found at Ser-95. Mg(2+) contacts are provided by Asp-213 and Asp-215. In terms of domain architecture, PAP-associated spans 386–440 (NLGDLLLGFLKYYATEFDWNSQMISVREAKAIPRPDGIEWRNKYICVEEPFDGTN).

It belongs to the DNA polymerase type-B-like family. GLD2 subfamily. As to quaternary structure, interacts with CPEB1, CPEB2, CPSF1 and PABPC1. Interacts with QKI isoform QKI7; promoting recruitment to miRNA miR-122 and miR-122 stabilization. Mg(2+) is required as a cofactor. Requires Mn(2+) as cofactor.

It localises to the cytoplasm. The protein localises to the nucleus. The catalysed reaction is RNA(n) + ATP = RNA(n)-3'-adenine ribonucleotide + diphosphate. Functionally, cytoplasmic poly(A) RNA polymerase that adds successive AMP monomers to the 3'-end of specific RNAs, forming a poly(A) tail. In contrast to the canonical nuclear poly(A) RNA polymerase, it only adds poly(A) to selected cytoplasmic mRNAs. Does not play a role in replication-dependent histone mRNA degradation. Adds a single nucleotide to the 3' end of specific miRNAs, monoadenylation stabilizes and prolongs the activity of some but not all miRNAs. The protein is Poly(A) RNA polymerase GLD2 of Bos taurus (Bovine).